The sequence spans 330 residues: MAKVYYDNDVNKEYLKNKKIAVLGYGSQGHAHALNLKDSGYDVVIGVREGQSRTKAEEDGFQAYDVSEAVERADVTVVLMPDEVQQRVFNEEIVPHLKPQSALVFAHGFNVHFGAIKAPDDVDVFLVAPKGPGHLVRREYVKGSAVPALFAVDQDVTGDAKALALNYAHGIGATRAGVIETTFKEETETDLFGEQAVLCGGITKLIHYGFETLTEAGYQPELAYFEVLHEMKLIVDLMYEGGMEKMRHSISNTAEFGDYVSGARVITPEVKENMKQVLADIQSGTFSRQFIEDNNNGFESFKSMRSTQAGHPIEKVGADLRMMMPFINNN.

The 180-residue stretch at 2-181 folds into the KARI N-terminal Rossmann domain; sequence AKVYYDNDVN…GATRAGVIET (180 aa). Residues 25–28, Arg48, Ser52, and 82–85 each bind NADP(+); these read YGSQ and DEVQ. His107 is a catalytic residue. Gly133 is a binding site for NADP(+). Positions 182-327 constitute a KARI C-terminal knotted domain; the sequence is TFKEETETDL…ADLRMMMPFI (146 aa). The Mg(2+) site is built by Asp190, Glu194, Glu226, and Glu230. Ser251 is a binding site for substrate.

Belongs to the ketol-acid reductoisomerase family. Mg(2+) serves as cofactor.

The catalysed reaction is (2R)-2,3-dihydroxy-3-methylbutanoate + NADP(+) = (2S)-2-acetolactate + NADPH + H(+). The enzyme catalyses (2R,3R)-2,3-dihydroxy-3-methylpentanoate + NADP(+) = (S)-2-ethyl-2-hydroxy-3-oxobutanoate + NADPH + H(+). The protein operates within amino-acid biosynthesis; L-isoleucine biosynthesis; L-isoleucine from 2-oxobutanoate: step 2/4. It functions in the pathway amino-acid biosynthesis; L-valine biosynthesis; L-valine from pyruvate: step 2/4. Its function is as follows. Involved in the biosynthesis of branched-chain amino acids (BCAA). Catalyzes an alkyl-migration followed by a ketol-acid reduction of (S)-2-acetolactate (S2AL) to yield (R)-2,3-dihydroxy-isovalerate. In the isomerase reaction, S2AL is rearranged via a Mg-dependent methyl migration to produce 3-hydroxy-3-methyl-2-ketobutyrate (HMKB). In the reductase reaction, this 2-ketoacid undergoes a metal-dependent reduction by NADPH to yield (R)-2,3-dihydroxy-isovalerate. The chain is Ketol-acid reductoisomerase (NADP(+)) from Macrococcus caseolyticus (strain JCSC5402) (Macrococcoides caseolyticum).